The primary structure comprises 613 residues: Xaa-Pro aminopeptidase ApepP (613 aa).

2 residues coordinate substrate: R77 and H388. Mn(2+) is bound by residues D408, D419, and H482. Residues H482, H491, and E517 each contribute to the substrate site. Residues E517 and E531 each contribute to the Mn(2+) site.

This sequence belongs to the peptidase M24B family. The cofactor is Mn(2+). Detected in gut, brain, testes and ovary.

It localises to the cytoplasm. It catalyses the reaction Release of any N-terminal amino acid, including proline, that is linked to proline, even from a dipeptide or tripeptide.. Inhibited by the chelating agent EDTA. Divalent metal ions have substrate- and concentration-dependent effects on activity. Activity towards bradykinin is inhibited with increasing Mn(2+) concentration. Activity towards substance P is stimulated by low Mn(2+) concentrations (in the range 10 uM-1 mM) but inhibited by Mn(2+) concentrations in excess of 1 mM. Ca(2+), Mg(2+) and Co(2+) stimulate activity towards substance P at concentrations of 10-100 uM but are inhibitory at concentrations of 1 mM. Zn(2+), Ni(2+) and Cu(2+) strongly inhibit activity towards substance P at concentrations of 1 mM. In terms of biological role, catalyzes the removal of a penultimate prolyl residue from the N-termini of peptides, such as Arg-Pro-Pro. This is Xaa-Pro aminopeptidase ApepP from Drosophila melanogaster (Fruit fly).